The chain runs to 410 residues: BTB and MATH domain-containing protein 42 (410 aa).

Over residues 1-19 (MSSRSSWSSTEQINRTISS) the composition is skewed to polar residues. The segment at 1 to 29 (MSSRSSWSSTEQINRTISSRADDLPPQPR) is disordered. Residues 45–173 (STKLEWKIEQ…DGTLFLICEV (129 aa)) enclose the MATH domain. Residues 219-287 (TDCVIHVGNK…MYTGATESLE (69 aa)) form the BTB domain. Residues 389-410 (TSNIPISVSPPPARKRLRRSAK) form a disordered region. The span at 401–410 (ARKRLRRSAK) shows a compositional bias: basic residues.

In terms of assembly, interacts with cul-3.

It participates in protein modification; protein ubiquitination. Functionally, probable substrate-specific adapter of an E3 ubiquitin-protein ligase complex which mediates the ubiquitination and subsequent proteasomal degradation of target proteins. This Caenorhabditis elegans protein is BTB and MATH domain-containing protein 42 (bath-42).